Reading from the N-terminus, the 266-residue chain is Integral membrane protein 2B (266 aa).

The Cytoplasmic segment spans residues 1 to 54 (MVKVTFNSALAQKEAKKXEPKSGEEALIIPPDTXAVDCKDPDEVVPVGQRRAWC). A helical; Signal-anchor for type II membrane protein membrane pass occupies residues 55–75 (WCMCFGLAFMLAGVILGGAYL). Residues 76 to 266 (YKYFALQPDD…KFAVETLICS (191 aa)) lie on the Lumenal side of the membrane. Residues 102-134 (EPPANAPAARYQTIEENIKIFEEDGVEFISVPV) are necessary for interaction with APP and inhibitor effects on APP processing. Residues 137–231 (FADSDPANIV…LCHDKETYKL (95 aa)) form the BRICHOS domain. Disulfide bonds link C164-C223 and C248-C265. A glycan (N-linked (GlcNAc...) asparagine) is linked at N170.

It belongs to the ITM2 family. Homodimer; disulfide-linked. Interacts with SPPL2A and SPPL2B. Interacts with APP. Mature BRI2 (mBRI2) interacts with the APP amyloid-beta A4 protein; the interaction occurs at the cell surface and in the endocytic compartments and enable alpha- and beta-secretase-induced APP cleavage inhibition. Mature BRI2 (mBRI2) interacts with the APP C99; the interaction occurs in the endocytic compartments and enable gamma-secretase-induced C99 cleavage inhibition. May form heterodimers with Bri23 peptide and APP amyloid-beta protein 40. Interacts with ADAM7 in sperm; the interaction increases following capacitation. The ectodomain C-terminal part of the imBRI2 is processed by furin producing a secreted Bri23 peptide and a mature BRI2, membrane form (mBRI2). The remaining part of the ectodomain of mBRI2 containing the BRICHOS domain is cleaved by ADAM10 and is secreted (BRI2C, soluble form). The membrane-bound N-terminal fragment (BRI2C, membrane form) is further proteolytically processed by SPPL2A and SPPL2B through regulated intramembrane proteolysis producing a secreted C-peptide and a BRI2 intracellular domain (BRI2 ICD) released in the cytosol. Shedding by ADAM10 facilitates intramembrane cleavage but is not absolutely required for BRI2 ICD generation. Post-translationally, glycosylation at Asn-170 is important for cell surface localization, but doesn't affect furin- and ADAM10-induced proteolytic processing.

The protein localises to the golgi apparatus membrane. Its subcellular location is the cell membrane. The protein resides in the endosome membrane. It is found in the secreted. In terms of biological role, plays a regulatory role in the processing of the amyloid-beta A4 precursor protein (APP) and acts as an inhibitor of the amyloid-beta peptide aggregation and fibrils deposition. Plays a role in the induction of neurite outgrowth. Functions as a protease inhibitor by blocking access of secretases to APP cleavage sites. Its function is as follows. Mature BRI2 (mBRI2) functions as a modulator of the amyloid-beta A4 precursor protein (APP) processing leading to a strong reduction in the secretion of secretase-processed amyloid-beta protein 40 and amyloid-beta protein 42. Bri23 peptide prevents aggregation of APP amyloid-beta protein 42 into toxic oligomers. This is Integral membrane protein 2B (ITM2B) from Sus scrofa (Pig).